The primary structure comprises 200 residues: Recombination protein RecR (200 aa).

The C4-type zinc-finger motif lies at 59–74; the sequence is CEVCGNVCESSPCTIC. One can recognise a Toprim domain in the interval 82 to 177; the sequence is GTICVVEEPK…KVTRLASGLP (96 aa).

This sequence belongs to the RecR family.

Its function is as follows. May play a role in DNA repair. It seems to be involved in an RecBC-independent recombinational process of DNA repair. It may act with RecF and RecO. The protein is Recombination protein RecR of Bifidobacterium animalis subsp. lactis (strain AD011).